The sequence spans 73 residues: Homeodomain-only protein (73 aa).

A DNA-binding region (homeobox; degenerate) is located at residues Ala-3–Glu-62.

In terms of assembly, interacts with serum response factor (SRF). Component of a large complex containing histone deacetylases such as HDAC2. Interacts with the acetylated forms of HSPA1A and HSPA1B. Interacts with HSPA8. As to expression, widely expressed. Expressed in the heart, brain, placenta, lung, skeletal and smooth muscles, uterus, urinary bladder, kidney and spleen. Down-regulated in some types of cancer such as lung cancer, choriocarcinoma, head and neck squamous cell carcinoma and oral squamous cell carcinoma.

It is found in the nucleus. The protein resides in the cytoplasm. Functionally, atypical homeodomain protein which does not bind DNA and is required to modulate cardiac growth and development. Acts via its interaction with SRF, thereby modulating the expression of SRF-dependent cardiac-specific genes and cardiac development. Prevents SRF-dependent transcription either by inhibiting SRF binding to DNA or by recruiting histone deacetylase (HDAC) proteins that prevent transcription by SRF. Overexpression causes cardiac hypertrophy. May act as a tumor suppressor. Acts as a co-chaperone for HSPA1A and HSPA1B chaperone proteins and assists in chaperone-mediated protein refolding. This chain is Homeodomain-only protein (HOPX), found in Homo sapiens (Human).